We begin with the raw amino-acid sequence, 540 residues long: tRNA-2-methylthio-N(6)-dimethylallyladenosine synthase (540 aa).

In terms of domain architecture, MTTase N-terminal spans Arg-41–His-157. [4Fe-4S] cluster is bound by residues Cys-50, Cys-86, Cys-120, Cys-194, Cys-198, and Cys-201. Positions Arg-180–Glu-416 constitute a Radical SAM core domain. Positions Lys-419–Leu-486 constitute a TRAM domain.

Belongs to the methylthiotransferase family. MiaB subfamily. In terms of assembly, monomer. Requires [4Fe-4S] cluster as cofactor.

Its subcellular location is the cytoplasm. It carries out the reaction N(6)-dimethylallyladenosine(37) in tRNA + (sulfur carrier)-SH + AH2 + 2 S-adenosyl-L-methionine = 2-methylsulfanyl-N(6)-dimethylallyladenosine(37) in tRNA + (sulfur carrier)-H + 5'-deoxyadenosine + L-methionine + A + S-adenosyl-L-homocysteine + 2 H(+). Catalyzes the methylthiolation of N6-(dimethylallyl)adenosine (i(6)A), leading to the formation of 2-methylthio-N6-(dimethylallyl)adenosine (ms(2)i(6)A) at position 37 in tRNAs that read codons beginning with uridine. The sequence is that of tRNA-2-methylthio-N(6)-dimethylallyladenosine synthase from Corynebacterium urealyticum (strain ATCC 43042 / DSM 7109).